A 64-amino-acid polypeptide reads, in one-letter code: Large ribosomal subunit protein bL28 (64 aa).

Residues methionine 1 to lysine 26 are disordered.

Belongs to the bacterial ribosomal protein bL28 family.

The sequence is that of Large ribosomal subunit protein bL28 from Ureaplasma urealyticum serovar 10 (strain ATCC 33699 / Western).